A 303-amino-acid chain; its full sequence is Phosphatidylglycerol--prolipoprotein diacylglyceryl transferase (303 aa).

The next 4 membrane-spanning stretches (helical) occupy residues 18 to 38 (LGPF…LVGL), 58 to 78 (LLPI…VAFE), 106 to 126 (IWGG…SIIF), and 133 to 153 (EHFW…QAIG). Residue arginine 154 participates in a 1,2-diacyl-sn-glycero-3-phospho-(1'-sn-glycerol) binding. The next 3 membrane-spanning stretches (helical) occupy residues 193 to 213 (PTFL…IFLF), 223 to 243 (LPPG…RFWI), and 266 to 286 (IAQL…WRIY).

This sequence belongs to the Lgt family.

It localises to the cell inner membrane. The enzyme catalyses L-cysteinyl-[prolipoprotein] + a 1,2-diacyl-sn-glycero-3-phospho-(1'-sn-glycerol) = an S-1,2-diacyl-sn-glyceryl-L-cysteinyl-[prolipoprotein] + sn-glycerol 1-phosphate + H(+). Its pathway is protein modification; lipoprotein biosynthesis (diacylglyceryl transfer). Functionally, catalyzes the transfer of the diacylglyceryl group from phosphatidylglycerol to the sulfhydryl group of the N-terminal cysteine of a prolipoprotein, the first step in the formation of mature lipoproteins. The protein is Phosphatidylglycerol--prolipoprotein diacylglyceryl transferase of Prochlorococcus marinus (strain NATL2A).